Consider the following 415-residue polypeptide: 3-isopropylmalate dehydratase large subunit (415 aa).

Residues Cys-295, Cys-353, and Cys-356 each coordinate [4Fe-4S] cluster.

It belongs to the aconitase/IPM isomerase family. LeuC type 2 subfamily. In terms of assembly, heterodimer of LeuC and LeuD. [4Fe-4S] cluster serves as cofactor.

The catalysed reaction is (2R,3S)-3-isopropylmalate = (2S)-2-isopropylmalate. The protein operates within amino-acid biosynthesis; L-leucine biosynthesis; L-leucine from 3-methyl-2-oxobutanoate: step 2/4. Catalyzes the isomerization between 2-isopropylmalate and 3-isopropylmalate, via the formation of 2-isopropylmaleate. The protein is 3-isopropylmalate dehydratase large subunit of Pyrobaculum neutrophilum (strain DSM 2338 / JCM 9278 / NBRC 100436 / V24Sta) (Thermoproteus neutrophilus).